The sequence spans 236 residues: Ribose-5-phosphate isomerase A 2 (236 aa).

Substrate-binding positions include 31 to 34 (SGTT), 86 to 89 (DGPD), and 99 to 102 (KGGG). The active-site Proton acceptor is the Glu108. Substrate is bound at residue Lys126.

The protein belongs to the ribose 5-phosphate isomerase family. Homodimer.

It catalyses the reaction aldehydo-D-ribose 5-phosphate = D-ribulose 5-phosphate. It functions in the pathway carbohydrate degradation; pentose phosphate pathway; D-ribose 5-phosphate from D-ribulose 5-phosphate (non-oxidative stage): step 1/1. Catalyzes the reversible conversion of ribose-5-phosphate to ribulose 5-phosphate. In Yersinia pestis, this protein is Ribose-5-phosphate isomerase A 2.